Reading from the N-terminus, the 102-residue chain is NADH-quinone oxidoreductase subunit K (102 aa).

3 helical membrane passes run 6–26 (ATHF…GVLT), 31–51 (LVIF…LIGF), and 62–82 (VFAL…LGIV).

The protein belongs to the complex I subunit 4L family. NDH-1 is composed of 14 different subunits. Subunits NuoA, H, J, K, L, M, N constitute the membrane sector of the complex.

The protein localises to the cell membrane. It catalyses the reaction a quinone + NADH + 5 H(+)(in) = a quinol + NAD(+) + 4 H(+)(out). Functionally, NDH-1 shuttles electrons from NADH, via FMN and iron-sulfur (Fe-S) centers, to quinones in the respiratory chain. The immediate electron acceptor for the enzyme in this species is believed to be ubiquinone. Couples the redox reaction to proton translocation (for every two electrons transferred, four hydrogen ions are translocated across the cytoplasmic membrane), and thus conserves the redox energy in a proton gradient. This is NADH-quinone oxidoreductase subunit K from Thermomicrobium roseum (strain ATCC 27502 / DSM 5159 / P-2).